The primary structure comprises 442 residues: Asparagine--tRNA ligase (442 aa).

This sequence belongs to the class-II aminoacyl-tRNA synthetase family. In terms of assembly, homodimer.

It is found in the cytoplasm. It carries out the reaction tRNA(Asn) + L-asparagine + ATP = L-asparaginyl-tRNA(Asn) + AMP + diphosphate + H(+). In Koribacter versatilis (strain Ellin345), this protein is Asparagine--tRNA ligase.